Reading from the N-terminus, the 334-residue chain is Endoplasmic reticulum junction formation protein lunapark (334 aa).

The Cytoplasmic segment spans residues 1 to 40; it reads MGWFFQKKKEFDFGGELDRLEMKLEEAQYNIDNIQSQKKK. Residues 12 to 42 are a coiled coil; it reads DFGGELDRLEMKLEEAQYNIDNIQSQKKKIL. Residues 41–61 form a helical membrane-spanning segment; that stretch reads ILFRYTVCSLAIYTIGMAVWA. At 62–78 the chain is on the lumenal side; sequence SRSSILFQHPLFSKLFR. Residues 79-99 traverse the membrane as a helical segment; the sequence is ISLYILGVFSLYMFRWAIAWF. Residues 99–127 adopt a coiled-coil conformation; it reads FCEKRLSRARMNLHKLNAEKRKILDALKS. The Cytoplasmic segment spans residues 100–334; it reads CEKRLSRARM…SVPESLTPTK (235 aa). The C4-type; plays a role in ER morphology zinc finger occupies 201–227; that stretch reads CSHCFHHNGLASYGEKASDVRYVCLFC. Positions 237 to 315 are disordered; it reads KSLPSSEMDS…SSPDASYNSV (79 aa). Over residues 239 to 252 the composition is skewed to polar residues; sequence LPSSEMDSNLQTNP. Positions 253–270 are enriched in low complexity; that stretch reads SSISKGKKNNSNNTTQKG. Residues 273 to 283 show a composition bias toward polar residues; the sequence is IISSPQVINAS. Position 284 is a phosphoserine (Ser284). Residues 297-315 are compositionally biased toward low complexity; sequence ALPTSPLSSSSPDASYNSV.

It belongs to the lunapark family.

It is found in the endoplasmic reticulum membrane. Its subcellular location is the golgi apparatus membrane. Its function is as follows. Plays a role in tubular endoplasmic reticulum network formation and maintenance. This chain is Endoplasmic reticulum junction formation protein lunapark (lnp1), found in Schizosaccharomyces pombe (strain 972 / ATCC 24843) (Fission yeast).